Here is a 457-residue protein sequence, read N- to C-terminus: MVCVSNNKSYLKSQHLKIIGQKTLRGKVKISGAKNSALVLLAASLLTDEKIILDNVPLLTDIEKMGNILKNLGVKLHNKDHQLIIDSKNISIQELPYELVNGLRASFFCIGALLTRFGEASIPLPGGCNIGERPINEHINGLRALGAEIIIDRDVVKAKLVKKKTKLFGANIRLNCPSVGATETLIMAASLAEGRTVIENAAREPEIQDLCQMLNKMGAKIYDSGKEKIIIDGVHKLHGCTHKVIPDRIEAGTFLIAAAATSSSITVSPVIPNHLEAVLNKLEESGSKIIIKGNSISIKGNNIKAVDIKTAPFPGFPTDLQAPFMALMTIAKGRSKITETIFENRMNHVDLLNQMGSSITLKNNIAHINGVKKLRGMTLVGSDLRSSAALIIAALTSKSVSYVYGLEHLDRGYENFEQKLSKLGIEIKRQITKQTINKSKNRSSNSKLKEVSEIRAA.

Position 34–35 (34–35) interacts with phosphoenolpyruvate; that stretch reads KN. Arginine 104 serves as a coordination point for UDP-N-acetyl-alpha-D-glucosamine. Catalysis depends on cysteine 128, which acts as the Proton donor. Cysteine 128 is modified (2-(S-cysteinyl)pyruvic acid O-phosphothioketal). UDP-N-acetyl-alpha-D-glucosamine is bound by residues aspartate 319 and isoleucine 341. The disordered stretch occupies residues 436-457; the sequence is INKSKNRSSNSKLKEVSEIRAA. The span at 447-457 shows a compositional bias: basic and acidic residues; it reads KLKEVSEIRAA.

This sequence belongs to the EPSP synthase family. MurA subfamily.

It is found in the cytoplasm. It catalyses the reaction phosphoenolpyruvate + UDP-N-acetyl-alpha-D-glucosamine = UDP-N-acetyl-3-O-(1-carboxyvinyl)-alpha-D-glucosamine + phosphate. Its pathway is cell wall biogenesis; peptidoglycan biosynthesis. Functionally, cell wall formation. Adds enolpyruvyl to UDP-N-acetylglucosamine. The protein is UDP-N-acetylglucosamine 1-carboxyvinyltransferase of Prochlorococcus marinus subsp. pastoris (strain CCMP1986 / NIES-2087 / MED4).